The chain runs to 432 residues: 23S rRNA (uracil(1939)-C(5))-methyltransferase RlmD (432 aa).

The region spanning 1 to 54 (MNPVVDILSLDHEGHGVARLDGKVTFVDGALAGERAEIAIFRKHAKYNSANAVA) is the TRAM domain. Cysteine 67, cysteine 73, cysteine 76, and cysteine 155 together coordinate [4Fe-4S] cluster. S-adenosyl-L-methionine is bound by residues glutamine 264, phenylalanine 293, asparagine 298, glutamate 314, asparagine 341, and aspartate 362. Cysteine 389 functions as the Nucleophile in the catalytic mechanism.

It belongs to the class I-like SAM-binding methyltransferase superfamily. RNA M5U methyltransferase family. RlmD subfamily.

It catalyses the reaction uridine(1939) in 23S rRNA + S-adenosyl-L-methionine = 5-methyluridine(1939) in 23S rRNA + S-adenosyl-L-homocysteine + H(+). Catalyzes the formation of 5-methyl-uridine at position 1939 (m5U1939) in 23S rRNA. The chain is 23S rRNA (uracil(1939)-C(5))-methyltransferase RlmD from Thiobacillus denitrificans (strain ATCC 25259 / T1).